A 312-amino-acid polypeptide reads, in one-letter code: Ribosomal protein L11 methyltransferase (312 aa).

T160, G181, D203, and N246 together coordinate S-adenosyl-L-methionine.

This sequence belongs to the methyltransferase superfamily. PrmA family.

The protein resides in the cytoplasm. The catalysed reaction is L-lysyl-[protein] + 3 S-adenosyl-L-methionine = N(6),N(6),N(6)-trimethyl-L-lysyl-[protein] + 3 S-adenosyl-L-homocysteine + 3 H(+). Its function is as follows. Methylates ribosomal protein L11. This is Ribosomal protein L11 methyltransferase from Staphylococcus carnosus (strain TM300).